Consider the following 199-residue polypeptide: MSNLENLTSKIIEDANKEAEKLLSEAKKEENKIVDEKIKKANKAKEQIIERAKRESRTKAERVISNAHLKVRNNKLEAKQEMINKVFDKAVIKLQNLSKDEYLNFVKSSILSLDIEGDEEIIVSPNDKDKIDISLMLTLNNQLKAKGKKALLKISNENRNIKGGFILYKNGIEINNSFEALVDSLRDELEQEIIEALFS.

The protein belongs to the V-ATPase E subunit family.

In terms of biological role, produces ATP from ADP in the presence of a proton gradient across the membrane. The sequence is that of V-type proton ATPase subunit E from Clostridium botulinum (strain 657 / Type Ba4).